The primary structure comprises 89 residues: Small ribosomal subunit protein bS20 (89 aa).

It belongs to the bacterial ribosomal protein bS20 family.

Its function is as follows. Binds directly to 16S ribosomal RNA. The chain is Small ribosomal subunit protein bS20 from Stenotrophomonas maltophilia (strain R551-3).